A 281-amino-acid polypeptide reads, in one-letter code: Shikimate dehydrogenase (NADP(+)) (281 aa).

Residues 15-17 (SKS) and Thr62 contribute to the shikimate site. The active-site Proton acceptor is the Lys66. Residues Asn87 and Asp102 each contribute to the shikimate site. NADP(+) contacts are provided by residues 127–131 (GAGGS), 151–156 (NRTPER), and Leu217. Position 219 (Tyr219) interacts with shikimate. Gly241 contributes to the NADP(+) binding site.

The protein belongs to the shikimate dehydrogenase family. In terms of assembly, homodimer.

The catalysed reaction is shikimate + NADP(+) = 3-dehydroshikimate + NADPH + H(+). It participates in metabolic intermediate biosynthesis; chorismate biosynthesis; chorismate from D-erythrose 4-phosphate and phosphoenolpyruvate: step 4/7. In terms of biological role, involved in the biosynthesis of the chorismate, which leads to the biosynthesis of aromatic amino acids. Catalyzes the reversible NADPH linked reduction of 3-dehydroshikimate (DHSA) to yield shikimate (SA). This Stenotrophomonas maltophilia (strain R551-3) protein is Shikimate dehydrogenase (NADP(+)).